A 460-amino-acid polypeptide reads, in one-letter code: Argininosuccinate lyase (460 aa).

It belongs to the lyase 1 family. Argininosuccinate lyase subfamily.

The protein localises to the cytoplasm. The enzyme catalyses 2-(N(omega)-L-arginino)succinate = fumarate + L-arginine. It functions in the pathway amino-acid biosynthesis; L-arginine biosynthesis; L-arginine from L-ornithine and carbamoyl phosphate: step 3/3. This Streptococcus mutans serotype c (strain ATCC 700610 / UA159) protein is Argininosuccinate lyase.